The chain runs to 307 residues: GTPase Era (307 aa).

Residues 7–181 (RCGWVALLGP…VKLVKSKLPV (175 aa)) enclose the Era-type G domain. A G1 region spans residues 15–22 (GPPNAGKS). 15–22 (GPPNAGKS) lines the GTP pocket. The segment at 41–45 (QTTRN) is G2. The tract at residues 62 to 65 (DTPG) is G3. Residues 62 to 66 (DTPGI) and 130 to 133 (NKVD) contribute to the GTP site. The G4 stretch occupies residues 130-133 (NKVD). Residues 160-162 (VSA) are G5. The 79-residue stretch at 212 to 290 (LRQELPYSVA…HLELWVKVRE (79 aa)) folds into the KH type-2 domain.

It belongs to the TRAFAC class TrmE-Era-EngA-EngB-Septin-like GTPase superfamily. Era GTPase family. In terms of assembly, monomer.

The protein resides in the cytoplasm. It is found in the cell inner membrane. An essential GTPase that binds both GDP and GTP, with rapid nucleotide exchange. Plays a role in 16S rRNA processing and 30S ribosomal subunit biogenesis and possibly also in cell cycle regulation and energy metabolism. The chain is GTPase Era from Nitratidesulfovibrio vulgaris (strain DSM 19637 / Miyazaki F) (Desulfovibrio vulgaris).